The following is a 459-amino-acid chain: Sulfite oxidase (459 aa).

The Cytochrome b5 heme-binding domain occupies 4 to 83 (YPRYTREEVG…LQQYKVGELS (80 aa)). Heme b is bound by residues His40, His65, and His69. Residues 83–115 (SPDEAPAAPDAQDPFAGDPPRHPGLRVNSQKPF) form a disordered region. Positions 85–100 (DEAPAAPDAQDPFAGD) are enriched in low complexity. Positions 86–95 (EAPAAPDAQD) are hinge. Residues 96–323 (PFAGDPPRHP…PSRWQQNDYK (228 aa)) are moco domain. Residues 136-140 (FTRNH), Cys185, Asp244, His283, Arg288, and 299-301 (SVK) contribute to the Mo-molybdopterin site. The homodimerization stretch occupies residues 324 to 459 (GFSPCVDWDT…RGVLSTAWHR (136 aa)).

As to quaternary structure, homodimer. It depends on heme b as a cofactor. Mo-molybdopterin is required as a cofactor.

It is found in the mitochondrion intermembrane space. The catalysed reaction is sulfite + O2 + H2O = sulfate + H2O2. The protein operates within energy metabolism; sulfur metabolism. Its function is as follows. Catalyzes the oxidation of sulfite to sulfate, the terminal reaction in the oxidative degradation of sulfur-containing amino acids. In Gallus gallus (Chicken), this protein is Sulfite oxidase (SUOX).